Here is a 663-residue protein sequence, read N- to C-terminus: MDIKKRIDELRKIIEYHNDKYYNQDDPEITDYEYDKLYVELRNLENSHPEYKIQSSPTQKVGGTVKRELRKVKHDIPVVSLQDVFSKEEVYSFVEKITSEVTYPKFVVEKKIDGLTVVLRYYNGELKEAITRGDGSIGESVFENILQVKSIPKHIPSKLNYLEIRGEIYMTNENFIKVNEKQEEIGGKIFKNPRNLAAGTIRQLDTSIVKDRNLDIFIFNLEISEGKKFETHSETLEWLSNQGFDVSPNFKICETADEVWNAILDIEESRWDLGYSIDGAVVKVDNLNDRISLGMTSKVPKWTVAFKYPPEQKETVIEDIIVQVSRTGRLNPLALLRPVILANTTISKATLHNQDFIDSKDIRIGDTVIIQKAGDIIPEIIRSIPEKRPDWAKKYIIPDVCPVCNSKTIREPDGVDTRCSNPDCEAQSFRKIGYFVSKDAMNIVGFGQNTVEALMKDGYIKKISDIYILKNYKDALIEKGIIGKEKSVNNLLNAIELSKDNDIDRLITGLGIRNVGKQSAKILAGNFKSMDELAGAAYEQLIELEDFGPTTVPDILEFFNSNAYIELIKKLKEAGVNTISKTLQKKIDNRFLGKTFVITGTLPTMKRDEAAEIIQSFGGKVSGSVSKRTSFVLAGEEAGSKLTKAQQLGISIITEEDLKDMIK.

NAD(+) contacts are provided by residues 31-35 (DYEYD), 80-81 (SL), and E109. K111 functions as the N6-AMP-lysine intermediate in the catalytic mechanism. Positions 132, 167, 283, and 307 each coordinate NAD(+). Residues C401, C404, C419, and C424 each contribute to the Zn(2+) site. The region spanning 586 to 663 (KIDNRFLGKT…TEEDLKDMIK (78 aa)) is the BRCT domain.

It belongs to the NAD-dependent DNA ligase family. LigA subfamily. Requires Mg(2+) as cofactor. Mn(2+) serves as cofactor.

The enzyme catalyses NAD(+) + (deoxyribonucleotide)n-3'-hydroxyl + 5'-phospho-(deoxyribonucleotide)m = (deoxyribonucleotide)n+m + AMP + beta-nicotinamide D-nucleotide.. In terms of biological role, DNA ligase that catalyzes the formation of phosphodiester linkages between 5'-phosphoryl and 3'-hydroxyl groups in double-stranded DNA using NAD as a coenzyme and as the energy source for the reaction. It is essential for DNA replication and repair of damaged DNA. This Clostridium kluyveri (strain NBRC 12016) protein is DNA ligase.